The primary structure comprises 153 residues: Small ribosomal subunit protein uS7c (153 aa).

Belongs to the universal ribosomal protein uS7 family. In terms of assembly, part of the 30S ribosomal subunit.

It localises to the plastid. Its function is as follows. One of the primary rRNA binding proteins, it binds directly to 16S rRNA where it nucleates assembly of the head domain of the 30S subunit. The chain is Small ribosomal subunit protein uS7c (rps7) from Helicosporidium sp. subsp. Simulium jonesii (Green alga).